A 473-amino-acid chain; its full sequence is Probable lipid II flippase MurJ (473 aa).

A run of 13 helical transmembrane segments spans residues 31–51 (TFGA…PFFL), 90–110 (LVTL…ASIF), 125–145 (LIRL…FYSV), 153–173 (FLPA…CLFG), 177–197 (WAAA…LPFG), 215–235 (FFGT…DVNV), 253–273 (LYQL…LSTL), 300–320 (IGLM…GAFT), 327–347 (SAQI…FNLL), 360–380 (PFFA…ILGF), 382–402 (MGAS…FVFL), 414–434 (IFKI…LRGS), and 439–459 (LGTI…SKLL).

The protein belongs to the MurJ/MviN family.

Its subcellular location is the cell inner membrane. Its pathway is cell wall biogenesis; peptidoglycan biosynthesis. Involved in peptidoglycan biosynthesis. Transports lipid-linked peptidoglycan precursors from the inner to the outer leaflet of the cytoplasmic membrane. The chain is Probable lipid II flippase MurJ from Thermotoga maritima (strain ATCC 43589 / DSM 3109 / JCM 10099 / NBRC 100826 / MSB8).